The sequence spans 263 residues: MPEGPEIRRAADHLEAAIKGKLLTDVWFAFAQLKPYESQLTGQMVTRIETRGKALLTHFSNGLTLYSHNQLYGVWRVIDTGEIPHTTRILRVRLQTADKTILLYSASDIEMLTAEQLTTHPFLQRVGPDVLDARLTPEEVKARLLSPRFRNRQFSGLLLDQAFLAGLGNYLRVEILWQSELTGQHKAKDLSEAQLNTLSHALLDIPRLSYATRGQTDENKHHGAQFRFKVFHRDGEACERCGGIIEKTTLSSRPFYWCPHCQK.

P2 acts as the Schiff-base intermediate with DNA in catalysis. Residue E3 is the Proton donor of the active site. K53 acts as the Proton donor; for beta-elimination activity in catalysis. Q70, R125, and N169 together coordinate DNA. The segment at K229–K263 adopts an FPG-type zinc-finger fold. R253 (proton donor; for delta-elimination activity) is an active-site residue.

The protein belongs to the FPG family. Zn(2+) is required as a cofactor.

It catalyses the reaction 2'-deoxyribonucleotide-(2'-deoxyribose 5'-phosphate)-2'-deoxyribonucleotide-DNA = a 3'-end 2'-deoxyribonucleotide-(2,3-dehydro-2,3-deoxyribose 5'-phosphate)-DNA + a 5'-end 5'-phospho-2'-deoxyribonucleoside-DNA + H(+). Functionally, involved in base excision repair of DNA damaged by oxidation or by mutagenic agents. Acts as a DNA glycosylase that recognizes and removes damaged bases. Has a preference for oxidized pyrimidines, such as thymine glycol, 5,6-dihydrouracil and 5,6-dihydrothymine. Has AP (apurinic/apyrimidinic) lyase activity and introduces nicks in the DNA strand. Cleaves the DNA backbone by beta-delta elimination to generate a single-strand break at the site of the removed base with both 3'- and 5'-phosphates. This chain is Endonuclease 8, found in Salmonella arizonae (strain ATCC BAA-731 / CDC346-86 / RSK2980).